A 170-amino-acid chain; its full sequence is Peptide deformylase (170 aa).

Fe cation-binding residues include Cys94 and His136. The active site involves Glu137. A Fe cation-binding site is contributed by His140.

It belongs to the polypeptide deformylase family. Fe(2+) serves as cofactor.

The catalysed reaction is N-terminal N-formyl-L-methionyl-[peptide] + H2O = N-terminal L-methionyl-[peptide] + formate. In terms of biological role, removes the formyl group from the N-terminal Met of newly synthesized proteins. Requires at least a dipeptide for an efficient rate of reaction. N-terminal L-methionine is a prerequisite for activity but the enzyme has broad specificity at other positions. The protein is Peptide deformylase of Agrobacterium fabrum (strain C58 / ATCC 33970) (Agrobacterium tumefaciens (strain C58)).